A 403-amino-acid polypeptide reads, in one-letter code: Dual-specificity RNA methyltransferase RlmN (403 aa).

The active-site Proton acceptor is Glu-121. Residues 127–375 (ETDRGTLCVS…VRTPRGRDIL (249 aa)) enclose the Radical SAM core domain. A disulfide bridge connects residues Cys-134 and Cys-378. [4Fe-4S] cluster-binding residues include Cys-141, Cys-145, and Cys-148. S-adenosyl-L-methionine contacts are provided by residues 204 to 205 (GE), Ser-236, 258 to 260 (SLH), and Asn-335. Cys-378 serves as the catalytic S-methylcysteine intermediate.

This sequence belongs to the radical SAM superfamily. RlmN family. The cofactor is [4Fe-4S] cluster.

Its subcellular location is the cytoplasm. It catalyses the reaction adenosine(2503) in 23S rRNA + 2 reduced [2Fe-2S]-[ferredoxin] + 2 S-adenosyl-L-methionine = 2-methyladenosine(2503) in 23S rRNA + 5'-deoxyadenosine + L-methionine + 2 oxidized [2Fe-2S]-[ferredoxin] + S-adenosyl-L-homocysteine. It carries out the reaction adenosine(37) in tRNA + 2 reduced [2Fe-2S]-[ferredoxin] + 2 S-adenosyl-L-methionine = 2-methyladenosine(37) in tRNA + 5'-deoxyadenosine + L-methionine + 2 oxidized [2Fe-2S]-[ferredoxin] + S-adenosyl-L-homocysteine. In terms of biological role, specifically methylates position 2 of adenine 2503 in 23S rRNA and position 2 of adenine 37 in tRNAs. m2A2503 modification seems to play a crucial role in the proofreading step occurring at the peptidyl transferase center and thus would serve to optimize ribosomal fidelity. This Rhodopseudomonas palustris (strain BisA53) protein is Dual-specificity RNA methyltransferase RlmN.